Here is a 54-residue protein sequence, read N- to C-terminus: uncharacterized protein (54 aa).

A disordered region spans residues 1–38 (MFPNSNGPNKMKALVAPSNSSTTSKTNNNNLPPNGRSS). The span at 17 to 38 (PSNSSTTSKTNNNNLPPNGRSS) shows a compositional bias: low complexity.

This is an uncharacterized protein from Dictyostelium discoideum (Social amoeba).